Here is a 203-residue protein sequence, read N- to C-terminus: Ribosomal RNA small subunit methyltransferase G (203 aa).

S-adenosyl-L-methionine contacts are provided by residues G73, L78, 124–125, and R138; that span reads VE.

This sequence belongs to the methyltransferase superfamily. RNA methyltransferase RsmG family.

Its subcellular location is the cytoplasm. It catalyses the reaction guanosine(527) in 16S rRNA + S-adenosyl-L-methionine = N(7)-methylguanosine(527) in 16S rRNA + S-adenosyl-L-homocysteine. Its function is as follows. Specifically methylates the N7 position of guanine in position 527 of 16S rRNA. This is Ribosomal RNA small subunit methyltransferase G from Haemophilus ducreyi (strain 35000HP / ATCC 700724).